The following is a 1406-amino-acid chain: Ubiquitin carboxyl-terminal hydrolase 6 (1406 aa).

Residues 100 to 292 (GIPMNIRGPV…RLWDVYLVEG (193 aa)) enclose the Rab-GAP TBC domain. A disordered region spans residues 348-380 (KLTRKQGDLPPPAKREQGSLAPRPVPASRGGKT). One can recognise a USP domain in the interval 532-1369 (TGLSNLGNTC…SAYILFYEQQ (838 aa)). Cysteine 541 acts as the Nucleophile in catalysis. The segment at 1120 to 1231 (HKPLTPQGDE…KKNLDASKEN (112 aa)) is disordered. Over residues 1129–1155 (ELSKPRILAREVKKVDAQSSAGKEDML) the composition is skewed to basic and acidic residues. Residues 1156–1197 (LSKSPSSLSANISSSPKGSPSSSRKSGTSCPSSKNSSPNSSP) are compositionally biased toward low complexity. The active-site Proton acceptor is the histidine 1328. Residues 1384 to 1406 (KMADTSSTDEDSESDYEKYSMLQ) form a disordered region.

This sequence belongs to the peptidase C19 family. As to quaternary structure, interacts with RAC1 and CDC42. Interacts (via Rab-GAP TBC domain) with ARF6. Interacts with calmodulin (CALM1, CALM2 and/or CALM3); the interaction is calcium-dependent. In terms of processing, monubiquitinated; ubiquitination is calmodulin and calcium dependent. Testis specific. Expressed in various cancer cell lines.

It is found in the cell membrane. The protein resides in the cytoplasm. The protein localises to the endosome. The catalysed reaction is Thiol-dependent hydrolysis of ester, thioester, amide, peptide and isopeptide bonds formed by the C-terminal Gly of ubiquitin (a 76-residue protein attached to proteins as an intracellular targeting signal).. In terms of biological role, deubiquitinase with an ATP-independent isopeptidase activity, cleaving at the C-terminus of the ubiquitin moiety. Catalyzes its own deubiquitination. In vitro, isoform 2, but not isoform 3, shows deubiquitinating activity. Promotes plasma membrane localization of ARF6 and selectively regulates ARF6-dependent endocytic protein trafficking. Is able to initiate tumorigenesis by inducing the production of matrix metalloproteinases following NF-kappa-B activation. May act as a GTPase-activating protein for RAB3A. The polypeptide is Ubiquitin carboxyl-terminal hydrolase 6 (USP6) (Homo sapiens (Human)).